Here is a 361-residue protein sequence, read N- to C-terminus: 5-formaminoimidazole-4-carboxamide-1-(beta)-D-ribofuranosyl 5'-monophosphate synthetase (361 aa).

5-amino-1-(5-phospho-beta-D-ribosyl)imidazole-4-carboxamide-binding residues include His-27 and Ser-94. Residues Arg-116 to Lys-348 form the ATP-grasp domain. Residues Pro-146–Cys-208 and Glu-230 contribute to the ATP site. Asn-258 serves as a coordination point for 5-amino-1-(5-phospho-beta-D-ribosyl)imidazole-4-carboxamide. Positions 297 and 310 each coordinate Mg(2+).

This sequence belongs to the phosphohexose mutase family. Mg(2+) is required as a cofactor. Requires Mn(2+) as cofactor.

The catalysed reaction is 5-amino-1-(5-phospho-beta-D-ribosyl)imidazole-4-carboxamide + formate + ATP = 5-formamido-1-(5-phospho-D-ribosyl)imidazole-4-carboxamide + ADP + phosphate. It participates in purine metabolism; IMP biosynthesis via de novo pathway; 5-formamido-1-(5-phospho-D-ribosyl)imidazole-4-carboxamide from 5-amino-1-(5-phospho-D-ribosyl)imidazole-4-carboxamide (formate route): step 1/1. Catalyzes the ATP- and formate-dependent formylation of 5-aminoimidazole-4-carboxamide-1-beta-d-ribofuranosyl 5'-monophosphate (AICAR) to 5-formaminoimidazole-4-carboxamide-1-beta-d-ribofuranosyl 5'-monophosphate (FAICAR) in the absence of folates. The sequence is that of 5-formaminoimidazole-4-carboxamide-1-(beta)-D-ribofuranosyl 5'-monophosphate synthetase from Methanococcus maripaludis (strain C5 / ATCC BAA-1333).